We begin with the raw amino-acid sequence, 311 residues long: MNDLMTKSFMSYVDLKKAAMKDLEAGGDGVELPEVGVTDERLKGFFQETEAVEEEMAAIRDALARLNAANEEGKSLHQPDALRALRGRVNADIIAVLRRARDIRARLEAMDRANAAQRRLSAGCREGTPLDRTRTALTAALRKKLKDLMLDFQALRQRIMSEYKDTVERRYYTLTGEVPEEEVIERIISEGRSEELLCAAVAEHGKGAVLATVHEIQDRHDAAREVERSLLELHQVFLDMAVVVESQGEQLDDIERHVNSATTYVQGGNKELRKAREHQRSSRKWLCIGIIILLLLVLLVIVPIATSFKRS.

Residues 1 to 284 lie on the Cytoplasmic side of the membrane; the sequence is MNDLMTKSFM…AREHQRSSRK (284 aa). The t-SNARE coiled-coil homology domain maps to 213 to 275; that stretch reads VHEIQDRHDA…QGGNKELRKA (63 aa). Residues 285 to 305 traverse the membrane as a helical; Anchor for type IV membrane protein segment; it reads WLCIGIIILLLLVLLVIVPIA. Topologically, residues 306 to 311 are vesicular; the sequence is TSFKRS.

Belongs to the syntaxin family. As to expression, expressed in roots and panicles.

It localises to the cell membrane. The protein localises to the cytoplasm. Functionally, vesicle trafficking protein that functions in the secretory pathway. This is Syntaxin-111 from Oryza sativa subsp. japonica (Rice).